We begin with the raw amino-acid sequence, 743 residues long: Phosphoribosylformylglycinamidine synthase subunit PurL (743 aa).

Residue His-54 is part of the active site. Tyr-57 and Lys-96 together coordinate ATP. Glu-98 lines the Mg(2+) pocket. Substrate contacts are provided by residues 99 to 102 (SHNH) and Arg-121. His-100 acts as the Proton acceptor in catalysis. Position 122 (Asp-122) interacts with Mg(2+). Position 245 (Gln-245) interacts with substrate. Residue Asp-273 participates in Mg(2+) binding. Residue 317-319 (ESQ) participates in substrate binding. Residues Asp-500 and Gly-537 each contribute to the ATP site. Mg(2+) is bound at residue Asn-538. Substrate is bound at residue Ser-540.

The protein belongs to the FGAMS family. Monomer. Part of the FGAM synthase complex composed of 1 PurL, 1 PurQ and 2 PurS subunits.

The protein resides in the cytoplasm. The catalysed reaction is N(2)-formyl-N(1)-(5-phospho-beta-D-ribosyl)glycinamide + L-glutamine + ATP + H2O = 2-formamido-N(1)-(5-O-phospho-beta-D-ribosyl)acetamidine + L-glutamate + ADP + phosphate + H(+). It functions in the pathway purine metabolism; IMP biosynthesis via de novo pathway; 5-amino-1-(5-phospho-D-ribosyl)imidazole from N(2)-formyl-N(1)-(5-phospho-D-ribosyl)glycinamide: step 1/2. Part of the phosphoribosylformylglycinamidine synthase complex involved in the purines biosynthetic pathway. Catalyzes the ATP-dependent conversion of formylglycinamide ribonucleotide (FGAR) and glutamine to yield formylglycinamidine ribonucleotide (FGAM) and glutamate. The FGAM synthase complex is composed of three subunits. PurQ produces an ammonia molecule by converting glutamine to glutamate. PurL transfers the ammonia molecule to FGAR to form FGAM in an ATP-dependent manner. PurS interacts with PurQ and PurL and is thought to assist in the transfer of the ammonia molecule from PurQ to PurL. The protein is Phosphoribosylformylglycinamidine synthase subunit PurL of Bacillus pumilus (strain SAFR-032).